The primary structure comprises 152 residues: Transcriptional regulator MraZ (152 aa).

SpoVT-AbrB domains are found at residues 5–52 and 81–124; these read HSNR…PMPE and ATEV…DQGR.

The protein belongs to the MraZ family. In terms of assembly, forms oligomers.

The protein localises to the cytoplasm. It is found in the nucleoid. In Solidesulfovibrio magneticus (strain ATCC 700980 / DSM 13731 / RS-1) (Desulfovibrio magneticus), this protein is Transcriptional regulator MraZ.